A 500-amino-acid chain; its full sequence is MTEQTQDENKLIAERRAKLEHIRANCPANGHPNNFDRKHKAADIQAEYGHHTKEELEGMDVQRSIAGRVMAKRGPFLVIQDVSGRIQAYAGKDVQKDLKATFQGLDIGDIIGVTGKLHLSGKGDLYVNMEQYQLLTKALRPLPEKFHGLSDQETRYRQRYVDLIVNEESREAFIMRSKVVSAIRNFMIKKEFMEVETPMMHSIPGGASARPFETHHNALDMAMYLRIAPELYLKRLVVGGFERVFEVNRNFRNEGLSPRHNPEFTMMEFYMAYADYKDLMDLTEEMLSSIATDLCGSTQLPYGEHTVDFGGPYARLSMLDAIKKYNPENATIQSMTYEEVKDVEFMRNLAKSIGMTIEKFWTCGQLLEEIFGETAEPQLMQPTFITGYPADISPLARRNDENHFITDRFEFFIGGREVANGFSELNDAEDQDNRFKAQVDAKDAGDDEAMFYDADYIRALEHGLPPTAGQGIGIDRLVMLFTNTHTIRDVILFPAMRPQG.

Residues Glu410 and Glu417 each coordinate Mg(2+).

This sequence belongs to the class-II aminoacyl-tRNA synthetase family. Homodimer. Mg(2+) serves as cofactor.

It localises to the cytoplasm. The enzyme catalyses tRNA(Lys) + L-lysine + ATP = L-lysyl-tRNA(Lys) + AMP + diphosphate. The polypeptide is Lysine--tRNA ligase (Shewanella piezotolerans (strain WP3 / JCM 13877)).